The chain runs to 1408 residues: ABC multidrug transporter MDR1 (1408 aa).

Residues 1–13 (MSASPSPIGAAAG) are compositionally biased toward low complexity. The tract at residues 1-103 (MSASPSPIGA…SISSAVPKSH (103 aa)) is disordered. Positions 17-38 (LQARRDEEVVDSEKDALAHDSH) are enriched in basic and acidic residues. The next 2 helical transmembrane spans lie at 147 to 167 (FAAP…IAAG) and 223 to 243 (LYLM…MFIW). The region spanning 157 to 464 (VFGLLLAIAA…LAPELAAVTK (308 aa)) is the ABC transmembrane type-1 1 domain. Asn244 is a glycosylation site (N-linked (GlcNAc...) asparagine). 4 helical membrane-spanning segments follow: residues 296-316 (KVAL…LAFV), 321-341 (LAGA…IMMT), 408-428 (IMFF…GILV), and 436-456 (GIVI…AMLA). One can recognise an ABC transporter 1 domain in the interval 499–744 (ISFENVRFHY…ENGPYAQLVN (246 aa)). 534–541 (GASGSGKS) provides a ligand contact to ATP. The next 2 helical transmembrane spans lie at 838–858 (IFAF…AILF) and 882–902 (LWYF…SAGF). In terms of domain architecture, ABC transmembrane type-1 2 spans 838–1125 (IFAFIAAICA…VFTFVPDASK (288 aa)). The N-linked (GlcNAc...) asparagine glycan is linked to Asn934. The next 4 membrane-spanning stretches (helical) occupy residues 952 to 972 (GLFG…IGGC), 973 to 993 (IIGL…IPIL), 1072 to 1092 (GLTF…IIDG), and 1099 to 1119 (FYTV…VFTF). 2 N-linked (GlcNAc...) asparagine glycosylation sites follow: Asn1127 and Asn1182. Residues 1162 to 1402 (VRIEGVHFRY…KGGYYDLVQM (241 aa)) form the ABC transporter 2 domain. 1197 to 1204 (GPSGCGKS) contacts ATP. Residue Asn1404 is glycosylated (N-linked (GlcNAc...) asparagine).

Belongs to the ABC transporter superfamily. ABCB family. Multidrug resistance exporter (TC 3.A.1.201) subfamily.

Its subcellular location is the cell membrane. The enzyme catalyses itraconazole(in) + ATP + H2O = itraconazole(out) + ADP + phosphate + H(+). It carries out the reaction voriconazole(in) + ATP + H2O = voriconazole(out) + ADP + phosphate + H(+). The catalysed reaction is fluconazole(in) + ATP + H2O = fluconazole(out) + ADP + phosphate + H(+). Its function is as follows. Pleiotropic ABC efflux transporter that confers resistance to structurally and functionally unrelated compounds including azoles such as fluconazole (FLC), itraconazole (ITC), posaconazole (POS), nocodazole and voriconazole (VRC). This chain is ABC multidrug transporter MDR1, found in Cryptococcus deuterogattii (strain R265) (Cryptococcus gattii VGII (strain R265)).